A 510-amino-acid polypeptide reads, in one-letter code: Peptide transporter imqJ (510 aa).

The next 3 membrane-spanning stretches (helical) occupy residues 1-21 (MVNQ…AVVA), 31-51 (IIFS…SSLP), and 57-77 (GISL…TGGI). Asn-80 carries N-linked (GlcNAc...) asparagine glycosylation. The next 4 helical transmembrane spans lie at 116–136 (IFTT…LITI), 143–163 (FSAA…IVLV), 231–251 (IFIL…NFIS), and 269–289 (IDPI…FPFL). The region spanning 348–468 (PAASEIRLLY…RCSSVFFFKA (121 aa)) is the Fe2OG dioxygenase domain. Fe cation-binding residues include His-377 and Asp-379. Asn-421 carries N-linked (GlcNAc...) asparagine glycosylation. Position 439 (His-439) interacts with Fe cation. Arg-459 serves as a coordination point for 2-oxoglutarate.

Belongs to the major facilitator superfamily. Proton-dependent oligopeptide transporter (POT/PTR) (TC 2.A.17) family.

It localises to the membrane. In terms of biological role, peptide transporter; part of the gene cluster that mediates the biosynthesis of imizoquins A to D, tripeptide-derived alkaloids that serve a protective role against oxidative stress that are essential for normal germination. This Aspergillus flavus (strain ATCC 200026 / FGSC A1120 / IAM 13836 / NRRL 3357 / JCM 12722 / SRRC 167) protein is Peptide transporter imqJ.